We begin with the raw amino-acid sequence, 194 residues long: Phosphoheptose isomerase (194 aa).

The 158-residue stretch at 37 to 194 (ISDSFKQGGK…LIEFEMAKDV (158 aa)) folds into the SIS domain. 52–54 (NGG) contacts substrate. The Zn(2+) site is built by histidine 61 and glutamate 65. Substrate contacts are provided by residues glutamate 65, 93–94 (ND), 119–121 (STS), serine 124, and glutamine 172. The Zn(2+) site is built by glutamine 172 and histidine 180.

Belongs to the SIS family. GmhA subfamily. As to quaternary structure, homotetramer. Zn(2+) serves as cofactor.

The protein localises to the cytoplasm. The catalysed reaction is 2 D-sedoheptulose 7-phosphate = D-glycero-alpha-D-manno-heptose 7-phosphate + D-glycero-beta-D-manno-heptose 7-phosphate. It functions in the pathway carbohydrate biosynthesis; D-glycero-D-manno-heptose 7-phosphate biosynthesis; D-glycero-alpha-D-manno-heptose 7-phosphate and D-glycero-beta-D-manno-heptose 7-phosphate from sedoheptulose 7-phosphate: step 1/1. Its function is as follows. Catalyzes the isomerization of sedoheptulose 7-phosphate in D-glycero-D-manno-heptose 7-phosphate. In Actinobacillus succinogenes (strain ATCC 55618 / DSM 22257 / CCUG 43843 / 130Z), this protein is Phosphoheptose isomerase.